The primary structure comprises 125 residues: Glycine cleavage system H protein (125 aa).

The region spanning 23 to 105 (VSTVGITEHA…FEGGWLFKVR (83 aa)) is the Lipoyl-binding domain. Residue Lys-64 is modified to N6-lipoyllysine.

It belongs to the GcvH family. The glycine cleavage system is composed of four proteins: P, T, L and H. (R)-lipoate serves as cofactor.

Functionally, the glycine cleavage system catalyzes the degradation of glycine. The H protein shuttles the methylamine group of glycine from the P protein to the T protein. In Streptomyces coelicolor (strain ATCC BAA-471 / A3(2) / M145), this protein is Glycine cleavage system H protein.